The chain runs to 21 residues: Histone H2B 1 (21 aa).

Residues 1 to 21 (MPDPAKTAPKKGSKKAVTKXA) are disordered. An N6-acetyllysine mark is found at lysine 6 and lysine 11. Residues 8–21 (APKKGSKKAVTKXA) are compositionally biased toward basic residues. A Phosphoserine modification is found at serine 13. An N6-acetyllysine mark is found at lysine 14 and lysine 19. Lysine 19 is covalently cross-linked (Glycyl lysine isopeptide (Lys-Gly) (interchain with G-Cter in ubiquitin)).

The protein belongs to the histone H2B family. In terms of assembly, the nucleosome is a histone octamer containing two molecules each of H2A, H2B, H3 and H4 assembled in one H3-H4 heterotetramer and two H2A-H2B heterodimers. The octamer wraps approximately 147 bp of DNA. Post-translationally, monoubiquitination at the C-terminal Lys gives a specific tag for epigenetic transcriptional activation and is also prerequisite for histone H3 'Lys-4' and 'Lys-79' methylation. In terms of processing, phosphorylated during apoptosis; which facilitates apoptotic chromatin condensation.

The protein resides in the nucleus. Its subcellular location is the chromosome. In terms of biological role, core component of nucleosome. Nucleosomes wrap and compact DNA into chromatin, limiting DNA accessibility to the cellular machineries which require DNA as a template. Histones thereby play a central role in transcription regulation, DNA repair, DNA replication and chromosomal stability. DNA accessibility is regulated via a complex set of post-translational modifications of histones, also called histone code, and nucleosome remodeling. Functionally, has broad-spectrum antimicrobial and antibacterial activity. It is important in the antimicrobial defenses of fish skin and possesses strong activity against saprolegnia, the most common fungal infection in fish. It is also inhibitory to fish bacterial pathogens, such as aeromonas hydrophila, vibrio alginolyticus and E.coli D31. The chain is Histone H2B 1 from Ictalurus punctatus (Channel catfish).